A 304-amino-acid chain; its full sequence is Homoserine O-succinyltransferase (304 aa).

Catalysis depends on Cys-142, which acts as the Acyl-thioester intermediate. Residues Lys-163 and Ser-192 each contribute to the substrate site. The active-site Proton acceptor is the His-235. Residue Glu-237 is part of the active site. A substrate-binding site is contributed by Arg-249.

This sequence belongs to the MetA family.

The protein resides in the cytoplasm. The catalysed reaction is L-homoserine + succinyl-CoA = O-succinyl-L-homoserine + CoA. It participates in amino-acid biosynthesis; L-methionine biosynthesis via de novo pathway; O-succinyl-L-homoserine from L-homoserine: step 1/1. Its function is as follows. Transfers a succinyl group from succinyl-CoA to L-homoserine, forming succinyl-L-homoserine. The chain is Homoserine O-succinyltransferase from Blochmanniella pennsylvanica (strain BPEN).